Here is a 955-residue protein sequence, read N- to C-terminus: MPSLSVVPLMPPWLRWLCGLVLAIALGVGLCRLIAESLWFHQLGYLEVVWQRWSVQALLFLAVAGVSQLFYGCQQQWLLRQRTVTLDPALRAQSTYRGLGLWQLLLCAGSLNWLLIVATYHIGAIALQLWQQRSEMTFNSPLLPQLSVWRVAELSLQMVQTPWLLGLSLVAVILGLWLPVGLFQGLGILLSLAMGAIASLSWPVVLKGLFAASDPHTEPLFRHSISFYLFQIPLWELLRLWLVNLSVVGLGGTTLGYLLANESLSHGKFLGFVRSQRRHLQGLSAFVFATVALSFWLERYKLLYSTKGAAFGAGYTDVTVRLPLYGWLSASAFGVACLLAWSAIRRGGEQRRLGPIAPGLFGFTLGYLGVILIVDWLLPTAIEAAIVQPNQLQRELPYIQRTITHTREGFNLEKMRVEPFQPENNLNAEILAANAATTRNIRLWDTRPLLETNRQLQQLRSYYRFPAAFLDRYSLKLAPDQDQSEIRQVLIAAREVDYSAVQQFARSWINEHLVFTHGYGFTMSPVNTAEANGLPKYFVRDIGDTGQLLVNPPQIRESISFFYPRIYYGELTNTYIFVPSEVPELDFPRGTENVYNHYDGTGGVPIASWWRRLVYSVYFRDWQLLLTPNLRPDSRVLFRRLIQDRVRAIAPFLRFDSEPYLVVADPRSEQEIAPRPSTAGVNYLYWMIDAYTVSRYYPYSDPGEHSFNYIRNSVKVVVDAYNGDVTFYVVEPEDVMIRTWQRIFPTLFHPLSAMPHQLYRHIRYPIDLLQVQSEQLLKYHMSDPVVFYNREDLWQIPKEIYREKPQAVAPYYLITKLPIGATEEFILLVPFTPVNRPNLIGWLAARSDGENYGKLLLYVFPKQELVFGPEQMEARINQDPVISQQISLWNRQGSRSVQGNLLIIPIQRSLLYVEPIYLEADQNRLPTLARVIVMDNQRIVMAPTLEEALKQLFPQ.

A run of 9 helical transmembrane segments spans residues 6–26 (VVPLMPPWLRWLCGLVLAIAL), 53–73 (WSVQALLFLAVAGVSQLFYGC), 98–118 (GLGLWQLLLCAGSLNWLLIVA), 163–183 (WLLGLSLVAVILGLWLPVGLF), 186–206 (LGILLSLAMGAIASLSWPVVL), 240–260 (LWLVNLSVVGLGGTTLGYLLA), 280–300 (LQGLSAFVFATVALSFWLERY), 324–344 (LYGWLSASAFGVACLLAWSAI), and 354–374 (GPIAPGLFGFTLGYLGVILIV).

It belongs to the UPF0182 family.

The protein localises to the cell membrane. This is UPF0182 protein tll1193 from Thermosynechococcus vestitus (strain NIES-2133 / IAM M-273 / BP-1).